The following is a 187-amino-acid chain: Mast cell-expressed membrane protein 1 (187 aa).

Topologically, residues 1 to 85 are cytoplasmic; that stretch reads MEVEEIYKHQ…PCWLYRAILS (85 aa). The segment at 49–71 is disordered; that stretch reads DHAKGGHSRPTSQVPAQCRPPSD. The helical; Signal-anchor for type II membrane protein transmembrane segment at 86–106 threads the bilayer; the sequence is LYILLALAFVLCIILSAFIMV. Topologically, residues 107-187 are extracellular; it reads KNAEMSKELL…LQKMPQSSPQ (81 aa). An N-linked (GlcNAc...) asparagine glycan is attached at N124.

Expressed specifically in mast cells. Found primarily in lung.

The protein resides in the membrane. This chain is Mast cell-expressed membrane protein 1, found in Homo sapiens (Human).